The chain runs to 401 residues: MDYSHKYIKYKKKYLSLRNKLDRENTPVIISRIEDNFSIDDKITQSNNNFTNNVFYNFDTSANIFSPMSLTFSLALLQLAAGSETDKSLTKFLGYKYSLDDINYLFNIMNSSIMKLSNLLVVNNKYSINQEYRSMLNGIAVIVQDDFITNKKLISQKVNEFVESETNAMIKNVINDSDIDNKSVFIMVNTIYFKANWKHKFPVDNTTKMRFHRTQEDVVDMMYQVNSFNYYENKALQLIELPYNDEDYVMGIILPKVYNTDNVDYTINNVPMFSPAEINEFINNCQYSKVELYVPKFTQRKRYEFVPILKKMGLTHLFNKNDTDLNIMAKDAYISRIIHEAVVVIDEIGTEAAATTIVIGQAMATRPVKQKIKVFKADHAFIYYIRHQPTGLFLFFGDYQG.

Belongs to the serpin family.

In terms of biological role, may act as an inhibitor for a host chymotrypsin-like protease. This is an uncharacterized protein from Acanthamoeba polyphaga mimivirus (APMV).